Reading from the N-terminus, the 340-residue chain is Putative cystathionine beta-lyase (340 aa).

K208 carries the post-translational modification N6-(pyridoxal phosphate)lysine.

Belongs to the trans-sulfuration enzymes family. Requires pyridoxal 5'-phosphate as cofactor.

The catalysed reaction is L,L-cystathionine + H2O = L-homocysteine + pyruvate + NH4(+). The enzyme catalyses an S-substituted L-cysteine + H2O = a thiol + pyruvate + NH4(+). It functions in the pathway amino-acid biosynthesis; L-methionine biosynthesis via de novo pathway; L-homocysteine from L-cystathionine: step 1/1. The protein is Putative cystathionine beta-lyase (IRC7) of Saccharomyces cerevisiae (strain ATCC 204508 / S288c) (Baker's yeast).